We begin with the raw amino-acid sequence, 1126 residues long: Probable serine/threonine-protein kinase DDB_G0280111 (1126 aa).

A Protein kinase domain is found at 16-295 (LNFVKQIAEG…NLLRNQQPLF (280 aa)). ATP is bound by residues 22 to 30 (IAEGGFSYV) and K45. Residue D147 is the Proton acceptor of the active site. Residues 314–333 (NNNNNINNNNNNNIVNGKNI) show a composition bias toward low complexity. 4 disordered regions span residues 314 to 469 (NNNN…NGNN), 760 to 901 (LNLN…QQQQ), 944 to 1072 (TPSS…DEVR), and 1095 to 1126 (NKQS…GLLN). The segment covering 347–364 (TPTPPPPAPSQSPSPSPS) has biased composition (pro residues). Residues 367-390 (VVNNIENNSNGLEHSNSNGNISQP) are compositionally biased toward polar residues. Low complexity-rich tracts occupy residues 413-422 (PPNNSNNSFD), 432-469 (NLSN…NGNN), and 760-795 (LNLN…LNSS). 2 stretches are compositionally biased toward polar residues: residues 796-825 (FDNI…SESG) and 833-845 (EPTS…YQQS). The span at 846-856 (NNNNNNNNNNN) shows a compositional bias: low complexity. The segment covering 857–866 (GTPISLTPGS) has biased composition (polar residues). Composition is skewed to low complexity over residues 886–901 (QQQQ…QQQQ), 953–971 (PSTG…QQSQ), and 1003–1035 (NVNI…NPNL). The segment covering 1095–1105 (NKQSRMNNPNN) has biased composition (polar residues). Residues 1108 to 1126 (DEGDSGFGDGEEEDEGLLN) show a composition bias toward acidic residues.

The protein belongs to the protein kinase superfamily. Ser/Thr protein kinase family.

It catalyses the reaction L-seryl-[protein] + ATP = O-phospho-L-seryl-[protein] + ADP + H(+). The enzyme catalyses L-threonyl-[protein] + ATP = O-phospho-L-threonyl-[protein] + ADP + H(+). The polypeptide is Probable serine/threonine-protein kinase DDB_G0280111 (Dictyostelium discoideum (Social amoeba)).